A 921-amino-acid polypeptide reads, in one-letter code: Sodium/calcium exchanger 2 (921 aa).

Positions 1–20 (MAPLALVGVTLLLAAPPCSG) are cleaved as a signal peptide. Residues 21–68 (AATPTPSLPPPPANDSDTSTGGCQGSYRCQPGVLLPVWEPDDPSLGDK) lie on the Extracellular side of the membrane. The tract at residues 22–42 (ATPTPSLPPPPANDSDTSTGG) is disordered. A glycan (N-linked (GlcNAc...) asparagine) is linked at Asn34. Residues 69–90 (AARAVVYFVAMVYMFLGVSIIA) form a helical membrane-spanning segment. The Cytoplasmic segment spans residues 91–130 (DRFMAAIEVITSKEKEITITKANGETSVGTVRIWNETVSN). Residues 131–152 (LTLMALGSSAPEILLSVIEVCG) form a helical membrane-spanning segment. The stretch at 135–175 (ALGSSAPEILLSVIEVCGHNFQAGELGPGTIVGSAAFNMFV) is one Alpha-1 repeat. At 153–164 (HNFQAGELGPGT) the chain is on the extracellular side. Residues 165–185 (IVGSAAFNMFVVIAVCIYVIP) form a helical membrane-spanning segment. Residues 186 to 196 (AGESRKIKHLR) lie on the Cytoplasmic side of the membrane. Residues 197-219 (VFFVTASWSIFAYVWLYLILAVF) traverse the membrane as a helical segment. The Extracellular portion of the chain corresponds to 220-222 (SPG). Residues 223–246 (VVQVWEALLTLVFFPVCVVFAWMA) traverse the membrane as a helical segment. Residues 247–720 (DKRLLFYKYV…DGSREERLPS (474 aa)) are Cytoplasmic-facing. Residues 248–267 (KRLLFYKYVYKRYRTDPRSG) form a putative calmodulin-binding region region. 2 consecutive Calx-beta domains span residues 384–483 (GAGE…VRLL) and 512–612 (ATVT…IELG). The Ca(2+) site is built by Glu407, Asp443, Asp468, Asp469, Ile471, Glu473, Glu476, Asp518, Asp519, Asp520, Glu536, Asp598, Glu599, and Glu600. Position 622 is a phosphoserine (Ser622). Glu665 serves as a coordination point for Ca(2+). Residues 721–740 (CFDYVMHFLTVFWKVLFACV) traverse the membrane as a helical segment. Topologically, residues 741-747 (PPTEYCH) are extracellular. A helical membrane pass occupies residues 748–770 (GWACFGVSILVIGLLTALIGDLA). Topologically, residues 771–772 (SH) are cytoplasmic. A helical transmembrane segment spans residues 773–791 (FGCTVGLKDSVNAVVFVAL). The stretch at 790–826 (ALGTSIPDTFASKVAALQDQCADASIGNVTGSNAVNV) is one Alpha-2 repeat. Residues 792-822 (GTSIPDTFASKVAALQDQCADASIGNVTGSN) lie on the Extracellular side of the membrane. Asn817 is a glycosylation site (N-linked (GlcNAc...) asparagine). The chain crosses the membrane as a helical span at residues 823–843 (AVNVFLGLGVAWSVAAVYWAV). At 844–854 (QGRPFEVRTGT) the chain is on the cytoplasmic side. Residues 855–875 (LAFSVTLFTVFAFVGIAVLLY) traverse the membrane as a helical segment. At 876 to 892 (RRRPHIGGELGGPRGPK) the chain is on the extracellular side. Residues 893–909 (LATTALFLGLWLLYILF) traverse the membrane as a helical segment. At 910–921 (ASLEAYCHIRGF) the chain is on the cytoplasmic side.

It belongs to the Ca(2+):cation antiporter (CaCA) (TC 2.A.19) family. SLC8 subfamily.

The protein resides in the cell membrane. It is found in the basolateral cell membrane. It localises to the perikaryon. Its subcellular location is the cell projection. The protein localises to the dendrite. The protein resides in the dendritic spine. It carries out the reaction Ca(2+)(in) + 3 Na(+)(out) = Ca(2+)(out) + 3 Na(+)(in). Its activity is regulated as follows. Calcium transport is down-regulated by Na(+) and stimulated by Ca(2+). Its function is as follows. Mediates the electrogenic exchange of Ca(2+) against Na(+) ions across the cell membrane, and thereby contributes to the regulation of cytoplasmic Ca(2+) levels and Ca(2+)-dependent cellular processes. Contributes to cellular Ca(2+) homeostasis in excitable cells. Contributes to the rapid decrease of cytoplasmic Ca(2+) levels back to baseline after neuronal activation, and thereby contributes to modulate synaptic plasticity, learning and memory. Plays a role in regulating urinary Ca(2+) and Na(+) excretion. The protein is Sodium/calcium exchanger 2 (SLC8A2) of Homo sapiens (Human).